Consider the following 266-residue polypeptide: Putative peptidyl-prolyl cis-trans isomerase NifM (266 aa).

Residues 124–221 form the PpiC domain; the sequence is PEQRLTRHLL…LGWHLLWCEA (98 aa).

This sequence belongs to the PpiC/parvulin rotamase family.

The enzyme catalyses [protein]-peptidylproline (omega=180) = [protein]-peptidylproline (omega=0). Its function is as follows. Required for the activation and stabilization of the iron-component (NifH) of nitrogenase. Probable PPIase. The polypeptide is Putative peptidyl-prolyl cis-trans isomerase NifM (nifM) (Klebsiella oxytoca).